The following is a 178-amino-acid chain: MAELATIARPYAEALFQSAKPAELAGCLEQLNELAQLAALPEVAALSNNPKVSADDLSKLLSGMVKTKLDGKVASFLNLINQNHRLAAVPEIAHQFEAMKNKSEGAAEVSITSAFPLEGSALNDLLSSLKKRFGGKELRPTIQVDPTLIGGVRIQVGDEVMDSSVKAQLAQMQASLGA.

This sequence belongs to the ATPase delta chain family. As to quaternary structure, F-type ATPases have 2 components, F(1) - the catalytic core - and F(0) - the membrane proton channel. F(1) has five subunits: alpha(3), beta(3), gamma(1), delta(1), epsilon(1). F(0) has three main subunits: a(1), b(2) and c(10-14). The alpha and beta chains form an alternating ring which encloses part of the gamma chain. F(1) is attached to F(0) by a central stalk formed by the gamma and epsilon chains, while a peripheral stalk is formed by the delta and b chains.

It localises to the cell membrane. In terms of biological role, f(1)F(0) ATP synthase produces ATP from ADP in the presence of a proton or sodium gradient. F-type ATPases consist of two structural domains, F(1) containing the extramembraneous catalytic core and F(0) containing the membrane proton channel, linked together by a central stalk and a peripheral stalk. During catalysis, ATP synthesis in the catalytic domain of F(1) is coupled via a rotary mechanism of the central stalk subunits to proton translocation. Functionally, this protein is part of the stalk that links CF(0) to CF(1). It either transmits conformational changes from CF(0) to CF(1) or is implicated in proton conduction. The polypeptide is ATP synthase subunit delta (Polynucleobacter asymbioticus (strain DSM 18221 / CIP 109841 / QLW-P1DMWA-1) (Polynucleobacter necessarius subsp. asymbioticus)).